Here is a 76-residue protein sequence, read N- to C-terminus: Acyl carrier protein (76 aa).

In terms of domain architecture, Carrier spans 1–76; it reads MATFDEVKEV…AAVDYIGSKQ (76 aa). S36 carries the post-translational modification O-(pantetheine 4'-phosphoryl)serine.

This sequence belongs to the acyl carrier protein (ACP) family. Post-translationally, 4'-phosphopantetheine is transferred from CoA to a specific serine of apo-ACP by AcpS. This modification is essential for activity because fatty acids are bound in thioester linkage to the sulfhydryl of the prosthetic group.

Its subcellular location is the cytoplasm. It participates in lipid metabolism; fatty acid biosynthesis. In terms of biological role, carrier of the growing fatty acid chain in fatty acid biosynthesis. This chain is Acyl carrier protein, found in Deinococcus geothermalis (strain DSM 11300 / CIP 105573 / AG-3a).